A 929-amino-acid chain; its full sequence is Bifunctional glutamine synthetase adenylyltransferase/adenylyl-removing enzyme (929 aa).

An adenylyl removase region spans residues 1-423; sequence MSTPIDSSRA…RHFEQIFAAR (423 aa). The segment at 433-929 is adenylyl transferase; the sequence is ARIRPEQSGD…FQLWEDIFGT (497 aa).

It belongs to the GlnE family. Requires Mg(2+) as cofactor.

The enzyme catalyses [glutamine synthetase]-O(4)-(5'-adenylyl)-L-tyrosine + phosphate = [glutamine synthetase]-L-tyrosine + ADP. It carries out the reaction [glutamine synthetase]-L-tyrosine + ATP = [glutamine synthetase]-O(4)-(5'-adenylyl)-L-tyrosine + diphosphate. Involved in the regulation of glutamine synthetase GlnA, a key enzyme in the process to assimilate ammonia. When cellular nitrogen levels are high, the C-terminal adenylyl transferase (AT) inactivates GlnA by covalent transfer of an adenylyl group from ATP to specific tyrosine residue of GlnA, thus reducing its activity. Conversely, when nitrogen levels are low, the N-terminal adenylyl removase (AR) activates GlnA by removing the adenylyl group by phosphorolysis, increasing its activity. The regulatory region of GlnE binds the signal transduction protein PII (GlnB) which indicates the nitrogen status of the cell. This Nitrosomonas europaea (strain ATCC 19718 / CIP 103999 / KCTC 2705 / NBRC 14298) protein is Bifunctional glutamine synthetase adenylyltransferase/adenylyl-removing enzyme.